The following is a 274-amino-acid chain: RsbT co-antagonist protein RsbRA (274 aa).

One can recognise an STAS domain in the interval 150 to 265; that stretch reads SAPLIPVFEN…KGIQTALEMT (116 aa). T171 and T205 each carry phosphothreonine.

Interacts with RsbRB and RsbS in the stressosome. The stressosome probably also contains RsbRC and RsbRD. In terms of processing, phosphorylated by RsbT. This threonine phosphorylation abrogates the ability of RsbRA to stimulate RsbT in vitro.

Acts as a positive regulator of sigma-B activity in response to salt and heat stress by stimulating the activity of the RsbT kinase toward RsbS in vitro. Functionally, one of 4 functionally non-identical RsbR paralogs, it functions in the environmental signaling branch of the general stress response. Its function is as follows. Negative regulator of sigma-B activity. Non-phosphorylated RsbS binds to RsbT, preventing its association with RsbU. Requires any one of RsbRA, RsbRB, RsbRC or RsbRD to sequester RsbT. When RsbS and the RsbR paralog(s) are phosphorylated, they release RsbT, which can then bind and activate RsbU. This is RsbT co-antagonist protein RsbRA (rsbRA) from Bacillus subtilis (strain 168).